A 382-amino-acid chain; its full sequence is MKSLSFSFLVTLFLYLTLSSARTLGKDVNKRVTAGSLQQVTGFGDNASGTLMYIYVPKNLATNPGIVVAIHYCTGTAQAYYTGSPYAQLAEQYGFIVIYPQSPYSGTCWDVSSQAALTHNGGGDSNSIANMVTWTISQYNANTAKVFVTGSSSGAMMTNVMAATYPELFAAATVYSGVGAGCFYSSSNQADAWNSSCATGSVISTPAVWGGIAKNMYSGYSGSRPRMQIYHGSADTTLYPQNYYETCKQWAGVFGYNYDSPQSTLANTPDANYQTTNWGPNLQGIYATGVGHTVPIHGAKDMEWFGFSGSGSSSTTTASATKTSTTSTTSTKTTSSTSSTTTSSTGVAAHWGQCGGSGWTGPTVCESGYTCTYSNAWYSQCL.

The first 21 residues, 1 to 21 (MKSLSFSFLVTLFLYLTLSSA), serve as a signal peptide directing secretion. The propeptide occupies 22-31 (RTLGKDVNKR). The interval 35–307 (GSLQQVTGFG…GAKDMEWFGF (273 aa)) is catalytic. N-linked (GlcNAc...) asparagine glycosylation is present at Asn-46. Catalysis depends on Ser-152, which acts as the Charge relay system. N-linked (GlcNAc...) asparagine glycosylation occurs at Asn-194. The ser/Thr-rich linker stretch occupies residues 308-345 (SGSGSSSTTTASATKTSTTSTTSTKTTSSTSSTTTSST). Residues 313 to 345 (SSTTTASATKTSTTSTTSTKTTSSTSSTTTSST) are compositionally biased toward low complexity. A disordered region spans residues 313 to 346 (SSTTTASATKTSTTSTTSTKTTSSTSSTTTSSTG). The region spanning 346–382 (GVAAHWGQCGGSGWTGPTVCESGYTCTYSNAWYSQCL) is the CBM1 domain.

The protein belongs to the carbohydrate esterase 1 (CE1) family. AxeA subfamily. In terms of assembly, monomer. In terms of processing, glycosylated.

The protein localises to the secreted. The catalysed reaction is Deacetylation of xylans and xylo-oligosaccharides.. Its pathway is glycan degradation; xylan degradation. Its activity is regulated as follows. Inactivated by phenylmethylsulfonylfluorid (PMSF), a specific inhibitor of serine esterases. Acetylxylan esterase involved in the hydrolysis of xylan, a major structural heterogeneous polysaccharide found in plant biomass representing the second most abundant polysaccharide in the biosphere, after cellulose. Degrades acetylated xylans by cleaving acetyl side groups from the hetero-xylan backbone. The polypeptide is Acetylxylan esterase A (axeA) (Talaromyces purpureogenus (Soft rot fungus)).